Reading from the N-terminus, the 248-residue chain is Triosephosphate isomerase (248 aa).

Substrate is bound at residue 9–11 (NWK). H94 (electrophile) is an active-site residue. E166 acts as the Proton acceptor in catalysis. Substrate contacts are provided by residues G172, S212, and 233–234 (GG).

The protein belongs to the triosephosphate isomerase family. As to quaternary structure, homodimer.

The protein resides in the cytoplasm. It carries out the reaction D-glyceraldehyde 3-phosphate = dihydroxyacetone phosphate. Its pathway is carbohydrate biosynthesis; gluconeogenesis. The protein operates within carbohydrate degradation; glycolysis; D-glyceraldehyde 3-phosphate from glycerone phosphate: step 1/1. In terms of biological role, involved in the gluconeogenesis. Catalyzes stereospecifically the conversion of dihydroxyacetone phosphate (DHAP) to D-glyceraldehyde-3-phosphate (G3P). This Clostridium botulinum (strain Okra / Type B1) protein is Triosephosphate isomerase.